Reading from the N-terminus, the 539-residue chain is Glucose-6-phosphate isomerase (539 aa).

Glu349 acts as the Proton donor in catalysis. Residues His380 and Lys508 contribute to the active site.

Belongs to the GPI family.

It is found in the cytoplasm. The catalysed reaction is alpha-D-glucose 6-phosphate = beta-D-fructose 6-phosphate. Its pathway is carbohydrate biosynthesis; gluconeogenesis. It participates in carbohydrate degradation; glycolysis; D-glyceraldehyde 3-phosphate and glycerone phosphate from D-glucose: step 2/4. In terms of biological role, catalyzes the reversible isomerization of glucose-6-phosphate to fructose-6-phosphate. This chain is Glucose-6-phosphate isomerase, found in Caulobacter sp. (strain K31).